The sequence spans 162 residues: uncharacterized protein (162 aa).

Residues Leu-6–Pro-99 form the HTH asnC-type domain. The H-T-H motif DNA-binding region spans Ile-25 to Lys-44.

This is an uncharacterized protein from Pyrococcus horikoshii (strain ATCC 700860 / DSM 12428 / JCM 9974 / NBRC 100139 / OT-3).